The primary structure comprises 553 residues: Vacuolar fusion protein MON1 homolog B (553 aa).

Methionine 1 bears the N-acetylmethionine mark. 2 disordered regions span residues 1-111 (MEAG…DEDW) and 534-553 (STPPSTSADQAPNNGLFTGL). The segment covering 23-35 (FPREEAGDSERVH) has biased composition (basic and acidic residues). The span at 52 to 72 (KDQPSSLLSPLPQTEAASSTC) shows a compositional bias: polar residues. Serine 57 bears the Phosphoserine mark. The segment covering 78–95 (AAASDSSPPGEPESNSEG) has biased composition (low complexity). Acidic residues predominate over residues 96-108 (QGEDPDDGGDPSD). Positions 541–553 (ADQAPNNGLFTGL) are enriched in polar residues.

The protein belongs to the MON1/SAND family. As to quaternary structure, interacts with CCNT2; down-regulates CCNT2-mediated activation of viral promoters during herpes simplex virus 1/HHV-1 infection. Found in a complex with RMC1, CCZ1 MON1A and MON1B.

This is Vacuolar fusion protein MON1 homolog B (Mon1b) from Mus musculus (Mouse).